Consider the following 1397-residue polypeptide: MAARSPSSSPPPPPVRRSSRRSLRVGRGAEVHAVRSEASGLAGAAREVVADKSDLLWRGEEGSGGRRGSGRAGAAVAPVASAPAGSWWPEGLSSEEAKATRSQLLEEELSSLKEELALCQADKEFVWSLWRRLQATNPDLTQTVSLVVEREKQKSEAKDRKVLEILQVKDSKIQELEQTESVLKQELHDLVKLKTLVDEENAFLRKELCDLQKKFKDKSQEVKDAKECVQSKEEQNRLVIKNLEEENERLRTRCTDLLNDLEKLRNQEAHWRKEKHSVDTRVKVLEENLIEAKKEIESAQTKYNVVSQQLNNKQAELLQKDMDITLIRKELQELQNVYKQNSAHTAQQADLIQQLQALNMDTQKVLRNQEDVHTAESMSYQKLYNELHMCFETTKSNEVMLRQSVVNLQGQLFQKEQENVKLKEKLEESQGTAPSLSPHDSDSSHSGKAPLSTLETLMISQKSEIEYLQKKLKVANEKLMANRSCDQDFSEKGTEGKHKEPPVKRSRSLSPKSSFMGSEELRKLKKAERKIENLEKTLQLKSQENDELRDAHEKRKERLQMLHTNYRAVKEQLKQWEEDSGMAESRQMKRAEPHQLRQEDSDAVWNELAYFKRENQELMVQKMTLQDELDELKMHMSIDKTTIQELNRCMAEKREEQLFRQHEDAEVKKSTPEKNEKAISEETLQKVIELENRLKSFEKNSRKLKEESKRLKKENDFLKSHLKHYQEDSEAREKELEQLLRVSKDVEHDKSELQTKITALETEVTTLRRQVTEAKALRGKDEEVVCPEERAHRPTDKAKSEMATTDVRARRCDCKTATTKVKFKAAKRKCSVGRHHTVLNHSIKVMSHVENLSKDGWEDVSEGSSDSETQTFQNLGTIIVETSQNISPIEDGRNQKEIDQTEGSCAQQRAMQTYSCEDIKAPQSISHNKNTKKMTFQKKSGSLQKSLHSALPARVNREKCKNLPAQKSSSSTISLRERIVSLQQQNSLLQNARRAAEASAKEYKEANEKLLHQQQVSDHRFQTSRQTIKKLTLDLAELRKEKEDLLKKVESSSDIMSLAEEVSRIMAPQIKVTTLGPSRSMDLEMKQLQCKLKNATNELTKQSSNVKSLRMELLAKDDHIKEMHERTSRMERDITMKRHLIEDLKFRQKVNSESNESFNEMLETLEKKVKSLTEECSNKKVSVDSLKQRLNVAVKEKSQYEQMYQKTKEELEKKDLKMSVLISKLNDTETAMAQIETAASEQLQGLALQSEQVLEGAQKKLLSANEKIEEFTVFVKALVNELQSDVHGTRHQIRELKKMQKSRHACKTSTHKAQTLAASILNISRSDLEEILDTEDELEIEKTKIDIENDKEWMLYIQKLLEGQLPFASYLLEAVLEKIKENKKLTEGYFTVMKDTK.

2 disordered regions span residues 1–43 and 56–76; these read MAAR…GLAG and LWRG…GAAV. Position 2 is an N-acetylalanine (A2). S5, S9, and S22 each carry phosphoserine. Coiled-coil stretches lie at residues 95–126 and 405–481; these read EEAK…KEFV and VVNL…KLMA. Disordered stretches follow at residues 422–449 and 485–521; these read LKEK…SGKA and CDQD…SEEL. The segment covering 485–503 has biased composition (basic and acidic residues); the sequence is CDQDFSEKGTEGKHKEPPV. Coiled coils occupy residues 674–778, 973–1114, and 1152–1299; these read KNEK…KALR, ISLR…MELL, and SESN…LKKM. The residue at position 1219 (S1219) is a Phosphoserine. The residue at position 1334 (T1334) is a Phosphothreonine.

In terms of assembly, interacts with CEP250 and CEP68. Interacts with NEK2; the interaction leads to phosphorylation of CNTLN. In terms of processing, phosphorylated directly or indirectly by NEK2.

The protein localises to the cytoplasm. It localises to the cytoskeleton. It is found in the microtubule organizing center. Its subcellular location is the centrosome. The protein resides in the centriole. In terms of biological role, required for centrosome cohesion and recruitment of CEP68 to centrosomes. This is Centlein from Mus musculus (Mouse).